Consider the following 179-residue polypeptide: ATP synthase subunit delta (179 aa).

Belongs to the ATPase delta chain family. As to quaternary structure, F-type ATPases have 2 components, F(1) - the catalytic core - and F(0) - the membrane proton channel. F(1) has five subunits: alpha(3), beta(3), gamma(1), delta(1), epsilon(1). F(0) has three main subunits: a(1), b(2) and c(10-14). The alpha and beta chains form an alternating ring which encloses part of the gamma chain. F(1) is attached to F(0) by a central stalk formed by the gamma and epsilon chains, while a peripheral stalk is formed by the delta and b chains.

It is found in the cell membrane. In terms of biological role, f(1)F(0) ATP synthase produces ATP from ADP in the presence of a proton or sodium gradient. F-type ATPases consist of two structural domains, F(1) containing the extramembraneous catalytic core and F(0) containing the membrane proton channel, linked together by a central stalk and a peripheral stalk. During catalysis, ATP synthesis in the catalytic domain of F(1) is coupled via a rotary mechanism of the central stalk subunits to proton translocation. Its function is as follows. This protein is part of the stalk that links CF(0) to CF(1). It either transmits conformational changes from CF(0) to CF(1) or is implicated in proton conduction. The polypeptide is ATP synthase subunit delta (Mycoplasmopsis pulmonis (strain UAB CTIP) (Mycoplasma pulmonis)).